The following is a 454-amino-acid chain: Exopolyphosphatase PRUNE1 (454 aa).

M1 bears the N-acetylmethionine mark. Residues D28, D30, D106, and D179 each coordinate Mn(2+). Residues 106 to 108 (DHH) carry the DHH motif motif. An essential for homodimerization region spans residues 394–421 (SLISGLSQDEEDPPLPPTPMNSLVDECP). Residues 397 to 420 (SGLSQDEEDPPLPPTPMNSLVDEC) form a disordered region. S400 is modified (phosphoserine). T411 carries the phosphothreonine modification. Residue S415 is modified to Phosphoserine.

This sequence belongs to the PPase class C family. Prune subfamily. As to quaternary structure, homooligomer. Able to homodimerize via its C-terminal domain. Interacts with NME1. Interacts with GSK3; at focal adhesion complexes where paxillin and vinculin are colocalized. Interacts with alpha and beta tubulin. Mn(2+) serves as cofactor.

Its subcellular location is the cytoplasm. It is found in the nucleus. The protein resides in the cell junction. It localises to the focal adhesion. The catalysed reaction is diphosphate + H2O = 2 phosphate + H(+). With respect to regulation, activated by magnesium ions and inhibited by manganese ions. Inhibited by dipyridamole, moderately sensitive to IBMX and inhibited by vinpocetine. Phosphodiesterase (PDE) that has higher activity toward cAMP than cGMP, as substrate. Plays a role in cell proliferation, migration and differentiation, and acts as a negative regulator of NME1. Plays a role in the regulation of neurogenesis. Involved in the regulation of microtubule polymerization. The polypeptide is Exopolyphosphatase PRUNE1 (Prune1) (Mus musculus (Mouse)).